The chain runs to 890 residues: Probable LRR receptor-like serine/threonine-protein kinase At1g51860 (890 aa).

The signal sequence occupies residues 1–23 (MKSLHWFLHLLIIAFTVLRSVEA). Residues 24–513 (QNQAGFISLD…KESKKVPMVA (490 aa)) are Extracellular-facing. 13 N-linked (GlcNAc...) asparagine glycosylation sites follow: N49, N96, N142, N181, N256, N285, N289, N295, N312, N332, N340, N402, and N419. 3 LRR repeats span residues 412–435 (RIIS…SKLT), 436–458 (LLTV…FAEM), and 460–481 (SLKL…PDSL). 3 N-linked (GlcNAc...) asparagine glycosylation sites follow: N465, N473, and N497. A helical membrane pass occupies residues 514–534 (IAASVAGVFALLVILAIFFVI). The Cytoplasmic portion of the chain corresponds to 535–890 (KRKNVKAHKS…STSDFAPGAR (356 aa)). Phosphothreonine is present on T575. One can recognise a Protein kinase domain in the interval 584–856 (NNFERVLGKG…HVVMELNDCV (273 aa)). Residues 590 to 598 (LGKGGFGTV) and K611 each bind ATP. The residue at position 656 (Y656) is a Phosphotyrosine. D708 (proton acceptor) is an active-site residue. At S742 the chain carries Phosphoserine. 2 positions are modified to phosphothreonine: T743 and T748. The residue at position 756 (Y756) is a Phosphotyrosine.

It belongs to the protein kinase superfamily. Ser/Thr protein kinase family.

It localises to the membrane. It catalyses the reaction L-seryl-[protein] + ATP = O-phospho-L-seryl-[protein] + ADP + H(+). It carries out the reaction L-threonyl-[protein] + ATP = O-phospho-L-threonyl-[protein] + ADP + H(+). The protein is Probable LRR receptor-like serine/threonine-protein kinase At1g51860 of Arabidopsis thaliana (Mouse-ear cress).